The sequence spans 692 residues: 5-taurinomethyluridine-[tRNA] synthase subunit MTO1, mitochondrial (692 aa).

A mitochondrion-targeting transit peptide spans 1 to 25 (MFYFRGCGRWVAASFTKLQFPLARL). Residues 43 to 48 (GGGHAG), valine 155, serine 218, and glutamine 407 contribute to the FAD site. Lysine 508 is modified (N6-methyllysine).

The protein belongs to the MnmG family. As to quaternary structure, homodimer; forms a dimer in the presence of potassium. Interacts with GTPBP3; forms the GTPBP3-MTO1 complex composed of homodimers of GTPBP3 and MTO1. FAD serves as cofactor.

It localises to the mitochondrion. The enzyme catalyses 5,10-methylenetetrahydrofolate + uridine(34) in tRNA + taurine + GTP + A + H2O = 5-taurinomethyluridine(34) in tRNA + 7,8-dihydrofolate + GDP + AH2 + phosphate + H(+). In terms of biological role, component of the GTPBP3-MTO1 complex that catalyzes the 5-taurinomethyluridine (taum(5)U) modification at the 34th wobble position (U34) of mitochondrial tRNAs (mt-tRNAs), which plays a role in mt-tRNA decoding and mitochondrial translation. Taum(5)U formation on mammalian mt-tRNA requires the presence of both GTPBP3-mediated GTPase activity and MTO1 catalytic activity. This Pongo abelii (Sumatran orangutan) protein is 5-taurinomethyluridine-[tRNA] synthase subunit MTO1, mitochondrial (MTO1).